Here is a 231-residue protein sequence, read N- to C-terminus: Aldehyde decarbonylase (231 aa).

The Fe cation site is built by E32, E60, H63, E115, and H147.

Belongs to the aldehyde decarbonylase family. Binds 2 metal cations per subunit. The catalytic dinuclear metal-binding site could be either a di-iron or a manganese-iron cofactor. is required as a cofactor.

It carries out the reaction a long-chain fatty aldehyde + 2 NADPH + O2 + H(+) = a long-chain alkane + formate + 2 NADP(+) + H2O. Catalyzes the decarbonylation of fatty aldehydes to alkanes. Requires the presence of ferredoxin, ferredoxin reductase and NADPH for in vitro decarbonylase activity. Involved in the biosynthesis of alkanes, mainly heptadecane and pentadecane. This Synechocystis sp. (strain ATCC 27184 / PCC 6803 / Kazusa) protein is Aldehyde decarbonylase.